We begin with the raw amino-acid sequence, 389 residues long: Cytochrome b (389 aa).

The next 4 helical transmembrane spans lie at 32–52, 76–98, 113–133, and 179–199; these read FGSL…FLAM, YILR…VHIG, LWSI…LGYV, and FFSL…AHMI. Residues H82 and H96 each coordinate heme b. Residues H183 and H197 each contribute to the heme b site. H202 serves as a coordination point for a ubiquinone. A run of 4 helical transmembrane segments spans residues 225-245, 289-309, 322-342, and 349-369; these read FIFK…IIVF, LLGV…PFVD, INMV…LVGA, and FIFL…VIVP.

This sequence belongs to the cytochrome b family. Fungal cytochrome b-c1 complex contains 10 subunits; 3 respiratory subunits, 2 core proteins and 5 low-molecular weight proteins. Cytochrome b-c1 complex is a homodimer. Requires heme b as cofactor.

It localises to the mitochondrion inner membrane. Its function is as follows. Component of the ubiquinol-cytochrome c reductase complex (complex III or cytochrome b-c1 complex) that is part of the mitochondrial respiratory chain. The b-c1 complex mediates electron transfer from ubiquinol to cytochrome c. Contributes to the generation of a proton gradient across the mitochondrial membrane that is then used for ATP synthesis. This chain is Cytochrome b (COB), found in Mycena viridimarginata.